Here is a 417-residue protein sequence, read N- to C-terminus: Tyrosine--tRNA ligase (417 aa).

Tyr34 lines the L-tyrosine pocket. Positions 39-48 (PTGDSMHIGH) match the 'HIGH' region motif. L-tyrosine is bound by residues Tyr165 and Gln169. The short motif at 227 to 231 (KFGKS) is the 'KMSKS' region element. Lys230 provides a ligand contact to ATP. The region spanning 349-417 (ENIVLWLVDT…KKKYFLARVK (69 aa)) is the S4 RNA-binding domain.

This sequence belongs to the class-I aminoacyl-tRNA synthetase family. TyrS type 1 subfamily. In terms of assembly, homodimer.

It localises to the cytoplasm. It catalyses the reaction tRNA(Tyr) + L-tyrosine + ATP = L-tyrosyl-tRNA(Tyr) + AMP + diphosphate + H(+). Catalyzes the attachment of tyrosine to tRNA(Tyr) in a two-step reaction: tyrosine is first activated by ATP to form Tyr-AMP and then transferred to the acceptor end of tRNA(Tyr). The protein is Tyrosine--tRNA ligase of Pediococcus pentosaceus (strain ATCC 25745 / CCUG 21536 / LMG 10740 / 183-1w).